A 276-amino-acid chain; its full sequence is Large ribosomal subunit protein uL2 (276 aa).

Residues 203–276 (NVSSGKAGRT…SDKFIVKRRK (74 aa)) are disordered. The span at 210–220 (GRTRWLGRRPQ) shows a compositional bias: basic residues. Residues 265–276 (KPSDKFIVKRRK) show a composition bias toward basic and acidic residues.

Belongs to the universal ribosomal protein uL2 family. Part of the 50S ribosomal subunit. Forms a bridge to the 30S subunit in the 70S ribosome.

Its function is as follows. One of the primary rRNA binding proteins. Required for association of the 30S and 50S subunits to form the 70S ribosome, for tRNA binding and peptide bond formation. It has been suggested to have peptidyltransferase activity; this is somewhat controversial. Makes several contacts with the 16S rRNA in the 70S ribosome. This is Large ribosomal subunit protein uL2 from Coprothermobacter proteolyticus (strain ATCC 35245 / DSM 5265 / OCM 4 / BT).